A 157-amino-acid chain; its full sequence is Ubiquitin-like protein 4A (157 aa).

Positions 1 to 76 (MQLTVKALQG…LNLVVKPLEK (76 aa)) constitute a Ubiquitin-like domain. Residue K48 forms a Glycyl lysine isopeptide (Lys-Gly) (interchain with G-Cter in ubiquitin) linkage. S90 is modified (phosphoserine). A required and sufficient for interaction with BAG6 region spans residues 96–138 (WQLISKVLARHFSVADASRVLEQLQRDYDRSLSRLTLDDIERL).

As to quaternary structure, component of the BAG6/BAT3 complex, at least composed of BAG6, UBL4A and GET4/TRC35. Interacts with BAG6; the interaction is direct and required for UBL4A protein stability. Interacts with USP13; may be indirect via BAG6. Polyubiquitinated. Ubiquitination by AMFR and deubiquitination by USP13 may regulate the interaction between the BAG6/BAT3 complex and SGTA and therefore may regulate client proteins fate.

It localises to the cytoplasm. The protein resides in the cytosol. The protein localises to the nucleus. As part of a cytosolic protein quality control complex, the BAG6/BAT3 complex, maintains misfolded and hydrophobic patches-containing proteins in a soluble state and participates in their proper delivery to the endoplasmic reticulum or alternatively can promote their sorting to the proteasome where they undergo degradation. The BAG6/BAT3 complex is involved in the post-translational delivery of tail-anchored/type II transmembrane proteins to the endoplasmic reticulum membrane. Recruited to ribosomes, it interacts with the transmembrane region of newly synthesized tail-anchored proteins and together with SGTA and ASNA1 mediates their delivery to the endoplasmic reticulum. Client proteins that cannot be properly delivered to the endoplasmic reticulum are ubiquitinated and sorted to the proteasome. Similarly, the BAG6/BAT3 complex also functions as a sorting platform for proteins of the secretory pathway that are mislocalized to the cytosol either delivering them to the proteasome for degradation or to the endoplasmic reticulum. The BAG6/BAT3 complex also plays a role in the endoplasmic reticulum-associated degradation (ERAD), a quality control mechanism that eliminates unwanted proteins of the endoplasmic reticulum through their retrotranslocation to the cytosol and their targeting to the proteasome. It maintains these retrotranslocated proteins in an unfolded yet soluble state condition in the cytosol to ensure their proper delivery to the proteasome. The chain is Ubiquitin-like protein 4A from Mus musculus (Mouse).